The primary structure comprises 276 residues: 3-methyl-2-oxobutanoate hydroxymethyltransferase (276 aa).

Mg(2+) contacts are provided by Asp-49 and Asp-88. 3-methyl-2-oxobutanoate is bound by residues 49–50 (DS), Asp-88, and Lys-118. Position 120 (Glu-120) interacts with Mg(2+). The Proton acceptor role is filled by Glu-187.

This sequence belongs to the PanB family. In terms of assembly, homodecamer; pentamer of dimers. Mg(2+) is required as a cofactor.

It localises to the cytoplasm. It carries out the reaction 3-methyl-2-oxobutanoate + (6R)-5,10-methylene-5,6,7,8-tetrahydrofolate + H2O = 2-dehydropantoate + (6S)-5,6,7,8-tetrahydrofolate. It participates in cofactor biosynthesis; (R)-pantothenate biosynthesis; (R)-pantoate from 3-methyl-2-oxobutanoate: step 1/2. Functionally, catalyzes the reversible reaction in which hydroxymethyl group from 5,10-methylenetetrahydrofolate is transferred onto alpha-ketoisovalerate to form ketopantoate. In Afipia carboxidovorans (strain ATCC 49405 / DSM 1227 / KCTC 32145 / OM5) (Oligotropha carboxidovorans), this protein is 3-methyl-2-oxobutanoate hydroxymethyltransferase.